A 156-amino-acid chain; its full sequence is 6,7-dimethyl-8-ribityllumazine synthase (156 aa).

Residues W22, 56 to 58 (AYE), and 80 to 82 (AVI) contribute to the 5-amino-6-(D-ribitylamino)uracil site. 85 to 86 (DT) is a binding site for (2S)-2-hydroxy-3-oxobutyl phosphate. The Proton donor role is filled by H88. F113 contacts 5-amino-6-(D-ribitylamino)uracil. R127 lines the (2S)-2-hydroxy-3-oxobutyl phosphate pocket.

This sequence belongs to the DMRL synthase family.

It catalyses the reaction (2S)-2-hydroxy-3-oxobutyl phosphate + 5-amino-6-(D-ribitylamino)uracil = 6,7-dimethyl-8-(1-D-ribityl)lumazine + phosphate + 2 H2O + H(+). The protein operates within cofactor biosynthesis; riboflavin biosynthesis; riboflavin from 2-hydroxy-3-oxobutyl phosphate and 5-amino-6-(D-ribitylamino)uracil: step 1/2. Catalyzes the formation of 6,7-dimethyl-8-ribityllumazine by condensation of 5-amino-6-(D-ribitylamino)uracil with 3,4-dihydroxy-2-butanone 4-phosphate. This is the penultimate step in the biosynthesis of riboflavin. The polypeptide is 6,7-dimethyl-8-ribityllumazine synthase (Deinococcus deserti (strain DSM 17065 / CIP 109153 / LMG 22923 / VCD115)).